A 72-amino-acid polypeptide reads, in one-letter code: LSCYLGYKHSQTCPPGENVCFVKTWCDAFCSTRGERIVMGCAATCPTAKSGVHIACCSTDNCNIYTKWGSGR.

Intrachain disulfides connect C3–C20, C13–C41, C26–C30, C45–C56, and C57–C62. At R72 the chain carries Arginine amide.

It belongs to the three-finger toxin family. Long-chain subfamily. Type II alpha-neurotoxin sub-subfamily. As to expression, expressed by the venom gland.

The protein localises to the secreted. Functionally, binds with high affinity to muscular (alpha-1/CHRNA1) and neuronal (alpha-7/CHRNA7) nicotinic acetylcholine receptor (nAChR) and inhibits acetylcholine from binding to the receptor, thereby impairing neuromuscular and neuronal transmission. This is Alpha-elapitoxin-Ast2b from Hydrophis stokesii (Stokes's sea snake).